Consider the following 56-residue polypeptide: Large ribosomal subunit protein bL33 (56 aa).

This sequence belongs to the bacterial ribosomal protein bL33 family.

The polypeptide is Large ribosomal subunit protein bL33 (Ehrlichia ruminantium (strain Gardel)).